The primary structure comprises 264 residues: Thymidylate synthase (264 aa).

DUMP is bound by residues arginine 21 and 126–127 (RR). Catalysis depends on cysteine 146, which acts as the Nucleophile. DUMP-binding positions include 166–169 (RSAD), asparagine 177, and 207–209 (HLY). Aspartate 169 contributes to the (6R)-5,10-methylene-5,6,7,8-tetrahydrofolate binding site. Residue alanine 263 coordinates (6R)-5,10-methylene-5,6,7,8-tetrahydrofolate.

The protein belongs to the thymidylate synthase family. Bacterial-type ThyA subfamily. In terms of assembly, homodimer.

The protein resides in the cytoplasm. It catalyses the reaction dUMP + (6R)-5,10-methylene-5,6,7,8-tetrahydrofolate = 7,8-dihydrofolate + dTMP. It participates in pyrimidine metabolism; dTTP biosynthesis. Catalyzes the reductive methylation of 2'-deoxyuridine-5'-monophosphate (dUMP) to 2'-deoxythymidine-5'-monophosphate (dTMP) while utilizing 5,10-methylenetetrahydrofolate (mTHF) as the methyl donor and reductant in the reaction, yielding dihydrofolate (DHF) as a by-product. This enzymatic reaction provides an intracellular de novo source of dTMP, an essential precursor for DNA biosynthesis. The sequence is that of Thymidylate synthase from Nitrobacter hamburgensis (strain DSM 10229 / NCIMB 13809 / X14).